The primary structure comprises 214 residues: Pyridoxine/pyridoxamine 5'-phosphate oxidase (214 aa).

Substrate is bound by residues 8–11 (RINY) and Lys-66. FMN contacts are provided by residues 61–66 (RILLIK), 76–77 (FT), Arg-82, Lys-83, and Gln-105. Substrate is bound by residues Tyr-123, Arg-127, and Ser-131. FMN is bound by residues 140–141 (QS) and Trp-184. Position 190 to 192 (190 to 192 (RLH)) interacts with substrate. An FMN-binding site is contributed by Arg-194.

It belongs to the pyridoxamine 5'-phosphate oxidase family. As to quaternary structure, homodimer. FMN serves as cofactor.

It carries out the reaction pyridoxamine 5'-phosphate + O2 + H2O = pyridoxal 5'-phosphate + H2O2 + NH4(+). The enzyme catalyses pyridoxine 5'-phosphate + O2 = pyridoxal 5'-phosphate + H2O2. It functions in the pathway cofactor metabolism; pyridoxal 5'-phosphate salvage; pyridoxal 5'-phosphate from pyridoxamine 5'-phosphate: step 1/1. Its pathway is cofactor metabolism; pyridoxal 5'-phosphate salvage; pyridoxal 5'-phosphate from pyridoxine 5'-phosphate: step 1/1. Functionally, catalyzes the oxidation of either pyridoxine 5'-phosphate (PNP) or pyridoxamine 5'-phosphate (PMP) into pyridoxal 5'-phosphate (PLP). This is Pyridoxine/pyridoxamine 5'-phosphate oxidase from Burkholderia vietnamiensis (strain G4 / LMG 22486) (Burkholderia cepacia (strain R1808)).